We begin with the raw amino-acid sequence, 110 residues long: Cell cycle protein GpsB (110 aa).

Residues leucine 32–serine 73 adopt a coiled-coil conformation.

The protein belongs to the GpsB family. Forms polymers through the coiled coil domains. Interacts with PBP1, MreC and EzrA.

The protein localises to the cytoplasm. Its function is as follows. Divisome component that associates with the complex late in its assembly, after the Z-ring is formed, and is dependent on DivIC and PBP2B for its recruitment to the divisome. Together with EzrA, is a key component of the system that regulates PBP1 localization during cell cycle progression. Its main role could be the removal of PBP1 from the cell pole after pole maturation is completed. Also contributes to the recruitment of PBP1 to the division complex. Not essential for septum formation. This Streptococcus agalactiae serotype Ia (strain ATCC 27591 / A909 / CDC SS700) protein is Cell cycle protein GpsB.